We begin with the raw amino-acid sequence, 418 residues long: Tyrosine--tRNA ligase (418 aa).

An L-tyrosine-binding site is contributed by tyrosine 34. A 'HIGH' region motif is present at residues 39-48; it reads PTADSLHLGH. L-tyrosine-binding residues include tyrosine 169 and glutamine 173. Positions 229–233 match the 'KMSKS' region motif; the sequence is KFGKS. An ATP-binding site is contributed by lysine 232. The 67-residue stretch at 352-418 folds into the S4 RNA-binding domain; sequence LNIVDMLVTA…GKKKYAVLTY (67 aa).

This sequence belongs to the class-I aminoacyl-tRNA synthetase family. TyrS type 1 subfamily. In terms of assembly, homodimer.

Its subcellular location is the cytoplasm. It carries out the reaction tRNA(Tyr) + L-tyrosine + ATP = L-tyrosyl-tRNA(Tyr) + AMP + diphosphate + H(+). Catalyzes the attachment of tyrosine to tRNA(Tyr) in a two-step reaction: tyrosine is first activated by ATP to form Tyr-AMP and then transferred to the acceptor end of tRNA(Tyr). In Streptococcus equi subsp. zooepidemicus (strain H70), this protein is Tyrosine--tRNA ligase.